A 125-amino-acid chain; its full sequence is Small ribosomal subunit protein uS13 (125 aa).

The segment at 97–125 is disordered; the sequence is PVRGQKTRSNARTRKGPRPSRIKTKKKSS. Residues 101 to 125 are compositionally biased toward basic residues; the sequence is QKTRSNARTRKGPRPSRIKTKKKSS.

The protein belongs to the universal ribosomal protein uS13 family. Part of the 30S ribosomal subunit. Forms a loose heterodimer with protein S19. Forms two bridges to the 50S subunit in the 70S ribosome.

Located at the top of the head of the 30S subunit, it contacts several helices of the 16S rRNA. In the 70S ribosome it contacts the 23S rRNA (bridge B1a) and protein L5 of the 50S subunit (bridge B1b), connecting the 2 subunits; these bridges are implicated in subunit movement. Contacts the tRNAs in the A and P-sites. The sequence is that of Small ribosomal subunit protein uS13 from Thermotoga neapolitana (strain ATCC 49049 / DSM 4359 / NBRC 107923 / NS-E).